The primary structure comprises 311 residues: Homeobox protein CDX-2 (311 aa).

The residue at position 60 (S60) is a Phosphoserine. The segment at 111–151 is disordered; the sequence is EYHAHHHPHHHPHHPAASPSCASGLLQTLNLGPPGPAATAA. A compositionally biased stretch (basic residues) spans 114–124; it reads AHHHPHHHPHH. Residues 185-215 are interaction with DNA; sequence KDKYRVVYTDHQRLELEKEFHFSRYITIRRK. The segment at residues 185 to 244 is a DNA-binding region (homeobox); the sequence is KDKYRVVYTDHQRLELEKEFHFSRYITIRRKSELAATLGLSERQVKIWFQNRRAKERKIK. The interval 227 to 241 is interaction with 5-mCpG DNA; sequence RQVKIWFQNRRAKER. Residues 239–311 are disordered; it reads KERKIKKKQQ…GGVLNSTVTQ (73 aa). Residues 248-257 are compositionally biased toward low complexity; that stretch reads QQQQQQQQQQ. Residues 258 to 268 show a composition bias toward pro residues; it reads PPQPPPQPSQP. S281 is modified (phosphoserine; by CDK2). Residues 281–293 carry the 4S motif; modulates transactivation activity and protein stability motif; that stretch reads SPVTSLQGSVPGS. Residues 285 to 298 are compositionally biased toward low complexity; that stretch reads SLQGSVPGSVPGVL.

This sequence belongs to the Caudal homeobox family. Can bind DNA as a monomer or homodimer. Ubiquitinated, leading to its degradation by the proteasome. In terms of processing, phosphorylation at Ser-60 reduces transactivation capacity. Phosphorylation at Ser-281 reduces transactivation capacity and increases ubiquitin-dependent proteasome degradation. In terms of tissue distribution, in the intestine, detected in ileum and proximal and distal colon (at protein level). In adult small intestine, predominantly localized in crypt and lower villus cells of the epithelium (at protein level). Expressed in the intestine but not detected in other tissues including stomach, liver, kidney, spleen, brain, heart, lung, pancreas, skeletal muscle and testis. Expressed specifically in gut epithelium where it is not restricted to a particular cell lineage. Abundant expression is seen in the proximal colon with slightly lower levels in distal colon. Expression in the proximal colon is not restricted either to a particular cell lineage or stage of differentiation while in the distal colon it is more abundant in the differentiated cells towards the top of the crypt.

The protein localises to the nucleus. Functionally, transcription factor which regulates the transcription of multiple genes expressed in the intestinal epithelium. Binds to the promoter of the intestinal sucrase-isomaltase SI and activates SI transcription. Binds to the DNA sequence 5'-ATAAAAACTTAT-3' in the promoter region of VDR and activates VDR transcription. Binds to and activates transcription of LPH. Activates transcription of CLDN2 and intestinal mucin MUC2. Binds to the 5'-AATTTTTTACAACACCT-3' DNA sequence in the promoter region of CA1 and activates CA1 transcription. Important in broad range of functions from early differentiation to maintenance of the intestinal epithelial lining of both the small and large intestine. Binds preferentially to methylated DNA. In Mus musculus (Mouse), this protein is Homeobox protein CDX-2 (Cdx2).